The primary structure comprises 332 residues: Ribosomal RNA small subunit methyltransferase C (332 aa).

The protein belongs to the methyltransferase superfamily. RsmC family. As to quaternary structure, monomer.

The protein localises to the cytoplasm. The catalysed reaction is guanosine(1207) in 16S rRNA + S-adenosyl-L-methionine = N(2)-methylguanosine(1207) in 16S rRNA + S-adenosyl-L-homocysteine + H(+). Specifically methylates the guanine in position 1207 of 16S rRNA in the 30S particle. The chain is Ribosomal RNA small subunit methyltransferase C from Stutzerimonas stutzeri (strain A1501) (Pseudomonas stutzeri).